Here is a 931-residue protein sequence, read N- to C-terminus: MEGDAPQRVSERVSGPGPGGGGGGMIRELCRGFGRHRRYLGQLRQNLRETQKFFRDIKCSHSHSCPSSPAGGGAAELGPAGDVAEAPLPAGQLSCIAFPPKEEKYLQQIVDCLPCILILGQDCNVKCQLLNLLLGVQVLPTTRLGSEENCKLRRLRFTYGTQTRVSLALPGQYELVHTLVAHQGNWDTIPEEDLEVQEDSEDAAHVLAELEVTMHHALLQDVDIVVAPCQGLRPAVDVLGDLVNDFLPVITYALHKDELSERDEQELQEIRKYFSFPIFFFKVPKLGSEIIASSTRRTENERSPLHHQLMDLGYLSSSHCNCGVPGQDTKAQSMLVEQSEKLRHLSTFSHQVLQTHLVDAAKALNRVHCHCLDIFINQAFDMQRDLQITPKRLEYTRKKENELYESLMNIANRKQEEMKDMICETLNTMKGELLDDAANMEFKDVIVPENGEAVGTRELKCCIRQIQELIISRLNQAVANKLISSVDYLRESFVGTLERCLQSLEKSQDVSIHITSNYLKQILNAAYHVEVTFHSGSSVTRMLWEQIKQIIQRITWVNPPTITLEWKRKVAQEAIDSLSASKLAKSICSQFRTRLNSSHEAFAASLRQLEAGHSGRLENTEDLWLKVRKDHAPRLARLSLESRSLQDVLLHRKPKLGQELGRGQYGVVYLCDNWGGHFPCALKSVVPPDEKHWNDLALEFHYMRSLPKHERLVDLHGSVIDYNYGGGSSIAVLLIMERLHRDLYTGLKAGLTLETRLQIALDVVEGIRFLHSQGLVHRDIKLKNVLLDKQNRAKITDLGFCKPEAMMSGSIVGTPIHMAPELFTGKYDNSVDVYAFGILFWYICSGSVKLPEAFERCASKDHLWNNVRRGARPERLPVFDEECWQLMEACWDGDPSQRPLLGIVQPMLQGIMERLCKSNSERPNTGLDDST.

Residues methionine 1–glycine 24 form a disordered region. A coiled-coil region spans residues arginine 397–glutamate 424. The region spanning proline 654–leucine 908 is the Protein kinase domain. ATP-binding positions include leucine 660–valine 668 and lysine 683. The active-site Proton acceptor is aspartate 779.

This sequence belongs to the protein kinase superfamily. Ser/Thr protein kinase family.

It is found in the cytoplasm. The protein resides in the cell membrane. Its subcellular location is the apical cell membrane. The protein localises to the basolateral cell membrane. It localises to the cell junction. It catalyses the reaction L-seryl-[protein] + ATP = O-phospho-L-seryl-[protein] + ADP + H(+). The enzyme catalyses L-threonyl-[protein] + ATP = O-phospho-L-threonyl-[protein] + ADP + H(+). It carries out the reaction L-tyrosyl-[protein] + ATP = O-phospho-L-tyrosyl-[protein] + ADP + H(+). In terms of biological role, acts as a positive regulator of ERK phosphorylation downstream of fibroblast growth factor-receptor activation. Involved in the regulation of both caspase-dependent apoptosis and caspase-independent cell death. In the skin, it plays a predominant role in suppressing caspase-dependent apoptosis in response to UV stress in a range of dermal cell types. This Canis lupus familiaris (Dog) protein is Dual serine/threonine and tyrosine protein kinase (DSTYK).